The following is a 431-amino-acid chain: Urokinase-type plasminogen activator (431 aa).

The signal sequence occupies residues 1 to 20 (MRALLARLLLCVLVVSDSKG). The 37-residue stretch at 27-63 (VPSNCDCLNGGTCVSNKYFSNIHWCNCPKKFGGQHCE) folds into the EGF-like domain. 6 disulfide bridges follow: Cys-31–Cys-39, Cys-33–Cys-51, Cys-53–Cys-62, Cys-70–Cys-151, Cys-91–Cys-133, and Cys-122–Cys-146. Positions 34-57 (LNGGTCVSNKYFSNIHWCNCPKKF) are binds urokinase plasminogen activator surface receptor. Thr-38 carries an O-linked (Fuc) threonine glycan. A Kringle domain is found at 70 to 151 (CYEGNGHFYR…LVQECMVHDC (82 aa)). The connecting peptide stretch occupies residues 152-177 (ADGKKPSSPPEELKFQCGQKTLRPRF). Ser-158 is subject to Phosphoserine. Intrachain disulfides connect Cys-168–Cys-299, Cys-209–Cys-225, Cys-217–Cys-288, Cys-313–Cys-382, Cys-345–Cys-361, and Cys-372–Cys-400. A Peptidase S1 domain is found at 179-424 (IIGGEFTTIE…FLPWIRSHTK (246 aa)). Active-site charge relay system residues include His-224 and Asp-275. Asn-322 carries an N-linked (GlcNAc...) asparagine glycan. At Ser-323 the chain carries Phosphoserine. Catalysis depends on Ser-376, which acts as the Charge relay system.

Belongs to the peptidase S1 family. Found in high and low molecular mass forms. Each consists of two chains, A and B. The high molecular mass form contains a long chain A which is cleaved to yield a short chain A. Forms heterodimer with SERPINA5. Binds LRP1B; binding is followed by internalization and degradation. Interacts with MRC2. Interacts with PLAUR. In complex with SERPINE1, interacts with PLAUR/uPAR. Interacts with SORL1 and LRP1, either alone or in complex with SERPINE1; these interactions are abolished in the presence of LRPAP1/RAP. The ternary complex composed of PLAUR-PLAU-PAI1 also interacts with SORLA. Phosphorylation of Ser-158 and Ser-323 abolishes proadhesive ability but does not interfere with receptor binding. Post-translationally, produced as an inactive single-chain protein (pro-uPA or sc-uPA), is processed into the active disulfide-linked two-chain form of PLAU/uPA by a proteolytic event mediated, at least, by TMPRSS4. In terms of tissue distribution, expressed in the prostate gland and prostate cancers.

The protein resides in the secreted. It carries out the reaction Specific cleavage of Arg-|-Val bond in plasminogen to form plasmin.. Its activity is regulated as follows. Inhibited by SERPINA5. Inhibited by SERPINE1. In terms of biological role, specifically cleaves the zymogen plasminogen to form the active enzyme plasmin. This chain is Urokinase-type plasminogen activator, found in Homo sapiens (Human).